The sequence spans 1823 residues: THO complex subunit 2 (1823 aa).

Residues 935-1003 (NRYESEISKQ…RRRLSREKDT (69 aa)) are a coiled coil. The Nuclear localization signal signature appears at 964–969 (KRKKEK). 2 disordered regions span residues 1244–1382 (LVGV…KDLN) and 1394–1823 (ALSS…GSRE). 3 stretches are compositionally biased toward basic and acidic residues: residues 1272–1283 (QMLKTKPLDGRT), 1312–1330 (KSME…DENP), and 1356–1367 (AKQDFGKDDGKS). Positions 1394–1409 (ALSSTAANGSIATGSS) are enriched in polar residues. Positions 1432–1596 (PRHEIVTSVR…EKSHPDDHFH (165 aa)) are enriched in basic and acidic residues. Over residues 1600–1610 (LPPPPPLPPNI) the composition is skewed to pro residues. 4 stretches are compositionally biased toward basic and acidic residues: residues 1616 to 1625 (AAKEDLERRA), 1636 to 1648 (PRHE…RSEE), 1655 to 1706 (DDAK…FEAS), and 1768 to 1785 (LGKE…DPIA). S1646 and S1696 each carry phosphoserine. A compositionally biased stretch (polar residues) spans 1802 to 1816 (MTVNGKTTRGEQSGS).

This sequence belongs to the THOC2 family. In terms of assembly, component of the THO complex, which is composed of THO1, THO2, THO3, THO5, THO6 and THO7.

It is found in the nucleus. Its function is as follows. Acts as a component of the THO subcomplex of the TREX complex which is thought to couple mRNA transcription, processing and nuclear export. The sequence is that of THO complex subunit 2 (THO2) from Arabidopsis thaliana (Mouse-ear cress).